Consider the following 1555-residue polypeptide: Regulating synaptic membrane exocytosis protein 2 (1555 aa).

Positions 1–35 are disordered; the sequence is MSAPLGPRGRPAPTPAASQPPPQPEMPDLSHLTEE. Pro residues predominate over residues 10–25; sequence RPAPTPAASQPPPQPE. Positions 26 to 154 constitute a RabBD domain; that stretch reads MPDLSHLTEE…TKSGAWFYNS (129 aa). Residues 86 to 142 form an FYVE-type zinc finger; that stretch reads KGDAPTCGICHKTKFADGCGHNCSYCQTKFCARCGGRVSLRSNKVMWVCNLCRKQQE. Zn(2+) contacts are provided by C92, C95, C108, C111, C116, C119, C134, and C137. The span at 154 to 163 shows a compositional bias: polar residues; that stretch reads SGSNTPQQPD. The tract at residues 154-530 is disordered; that stretch reads SGSNTPQQPD…STPEYTSCDD (377 aa). Basic and acidic residues predominate over residues 170 to 185; the sequence is LRSEEAPQEKKAKLHE. The span at 259–268 shows a compositional bias: polar residues; sequence YVPSDSTMPR. 4 stretches are compositionally biased toward basic and acidic residues: residues 287-298, 317-335, 351-370, and 379-403; these read EPDHLNYRDSNR, RDEYERQRREEEYQARYRS, EQMRIHAEVSRARHERRHSD, and EDSRISLLRMDRPSRQRSVSERRAA. S369 is modified (phosphoserine). Positions 418–432 are enriched in polar residues; that stretch reads AQGQSSYPQRTTNHS. The segment covering 444-461 has biased composition (basic and acidic residues); that stretch reads DRPELRRADSLRKQHHLD. Residues 479-490 are compositionally biased toward polar residues; sequence RNDSLSSDQSES. Positions 497–506 are enriched in basic residues; it reads RPHKSKKGGK. Positions 590-676 constitute a PDZ domain; that stretch reads DGSVPRDSGA…EPQVELVVSR (87 aa). T611 carries the phosphothreonine modification. The disordered stretch occupies residues 682–716; that stretch reads PRIPDSTHAQLESSSSSFESQKMDRPSISVTSPMS. Phosphoserine occurs at positions 713 and 716. The C2 1 domain maps to 743–866; that stretch reads FVPRVQIKLW…ALLDDEPHWY (124 aa). Disordered regions lie at residues 877–913, 935–1145, 1180–1207, 1268–1288, and 1307–1332; these read PLPHPSPYMPRRQLHGESPTRRLQRSKRISDSEVSDY, STLS…KRNS, YRSGWDPHRGADTVSTKSSDSDVSDVSA, LEKNDGSQSDTAVGALGTSGK, and KSRSASQLSQTEGGGKKLRSTVQRST. Polar residues predominate over residues 935–953; it reads STLSVPEQVMSSNHCSPSG. Basic and acidic residues-rich tracts occupy residues 996 to 1014 and 1025 to 1071; these read RMDRHRVMDDHYSSERDSH and QTSE…ERAD. Over residues 1092-1114 the composition is skewed to low complexity; it reads ALSRSHPRTGSVQTSPSSTPVTG. The residue at position 1106 (S1106) is a Phosphoserine. 2 stretches are compositionally biased toward basic and acidic residues: residues 1128-1141 and 1180-1190; these read TLERMITEDMDSTR and YRSGWDPHRGA. S1200 and S1276 each carry phosphoserine. Residues 1401–1519 enclose the C2 2 domain; that stretch reads AMGDIQVGMM…ELSNMVIGWF (119 aa). A phosphoserine mark is found at S1540 and S1543.

In terms of assembly, heterodimer with PCLO. Part of a ternary complex involving PCLO and EPAC2. Interacts with RAB3C, RAB3D and RAB26. Binds RAB3A and RAB3B that have been activated by GTP-binding. Interacts with TSPOAP1 and RIMBP2. Interacts with PPFIA3 and PPFIA4. Interacts via its zinc finger with the first C2 domain of UNC13A. Forms a complex consisting of UNC13A, RIMS2 and RAB3A. As to expression, highly expressed in hippocampus, brain cortex, cerebellum and olfactory bulb. Detected at intermediate levels in midbrain, hindbrain and spinal cord, and at low levels in testis.

It is found in the cell membrane. The protein localises to the synapse. It localises to the presynaptic cell membrane. Functionally, rab effector involved in exocytosis. May act as scaffold protein. Plays a role in dendrite formation by melanocytes. This Rattus norvegicus (Rat) protein is Regulating synaptic membrane exocytosis protein 2 (Rims2).